A 181-amino-acid chain; its full sequence is HGPRTase-like protein 2 (181 aa).

It belongs to the purine/pyrimidine phosphoribosyltransferase family. Archaeal HPRT subfamily.

In terms of biological role, may catalyze a purine salvage reaction, the substrate is unknown. This is HGPRTase-like protein 2 from Natrialba magadii (strain ATCC 43099 / DSM 3394 / CCM 3739 / CIP 104546 / IAM 13178 / JCM 8861 / NBRC 102185 / NCIMB 2190 / MS3) (Natronobacterium magadii).